Consider the following 244-residue polypeptide: Agamous-like MADS-box protein MADS3 (244 aa).

In terms of domain architecture, MADS-box spans 1-61; that stretch reads MGRGRVELKR…GKLYEFGSAG (61 aa). The region spanning 85-175 is the K-box domain; sequence TQSWYQEVSK…KLKLEAEGQS (91 aa). Residues 180–206 are disordered; it reads QGSWNPSTATAGNSSFPVHPSQSNPMD. Residues 181–204 show a composition bias toward polar residues; it reads GSWNPSTATAGNSSFPVHPSQSNP.

As to expression, expressed in flowers and seeds.

Its subcellular location is the nucleus. Functionally, probable transcription factor involved in flower development. The chain is Agamous-like MADS-box protein MADS3 from Vitis vinifera (Grape).